The sequence spans 877 residues: DNA mismatch repair protein MutS (877 aa).

Residue 630-637 coordinates ATP; sequence GPNMAGKS.

Belongs to the DNA mismatch repair MutS family.

Functionally, this protein is involved in the repair of mismatches in DNA. It is possible that it carries out the mismatch recognition step. This protein has a weak ATPase activity. The polypeptide is DNA mismatch repair protein MutS (Jannaschia sp. (strain CCS1)).